The sequence spans 607 residues: UvrABC system protein C (607 aa).

Positions Glu-15–Val-94 constitute a GIY-YIG domain. Residues Asp-204–Val-239 form the UVR domain.

It belongs to the UvrC family. As to quaternary structure, interacts with UvrB in an incision complex.

It localises to the cytoplasm. The UvrABC repair system catalyzes the recognition and processing of DNA lesions. UvrC both incises the 5' and 3' sides of the lesion. The N-terminal half is responsible for the 3' incision and the C-terminal half is responsible for the 5' incision. The sequence is that of UvrABC system protein C from Dehalococcoides mccartyi (strain ATCC BAA-2100 / JCM 16839 / KCTC 5957 / BAV1).